The primary structure comprises 233 residues: AA9 family lytic polysaccharide monooxygenase A (233 aa).

Positions 1–17 (MKLTTSVALLAAAGAQA) are cleaved as a signal peptide. The Cu(2+) site is built by H18 and H90. Intrachain disulfides connect C59–C180 and C150–C233. N132 carries N-linked (GlcNAc...) asparagine glycosylation. The O2 site is built by H166 and Q175. A Cu(2+)-binding site is contributed by Y177.

It belongs to the polysaccharide monooxygenase AA9 family. The cofactor is Cu(2+).

The protein resides in the secreted. The catalysed reaction is [(1-&gt;4)-beta-D-glucosyl]n+m + reduced acceptor + O2 = 4-dehydro-beta-D-glucosyl-[(1-&gt;4)-beta-D-glucosyl]n-1 + [(1-&gt;4)-beta-D-glucosyl]m + acceptor + H2O.. Lytic polysaccharide monooxygenase (LPMO) that depolymerizes crystalline and amorphous polysaccharides via the oxidation of scissile alpha- or beta-(1-4)-glycosidic bonds, yielding C1 and C4 oxidation products. Catalysis by LPMOs requires the reduction of the active-site copper from Cu(II) to Cu(I) by a reducing agent and H(2)O(2) or O(2) as a cosubstrate. Shows endoglucanase activity on tamarind xyloglucan, as well as on beechwood xylan when combined with phosphoric acid swollen cellulose (PASC). Shows no activity on wheat arabinoxylan, konjac glucomannan, acetylated spruce galactoglucomannan, or cellopentaose. The protein is AA9 family lytic polysaccharide monooxygenase A of Thermothielavioides terrestris (strain ATCC 38088 / NRRL 8126) (Thielavia terrestris).